The following is a 1801-amino-acid chain: MAVPGSFPLLVEGSWGPDPPKNLNTKLQMYFQSPKRSGGGECEVRQDPRSPSRFLVFFYPEDVRQKVLERKNHELVWQGKGTFKLTVQLPATPDEIDHVFEEELLTKESKTKEDVKEPDVSEELDTKLPLDGGLDKMEDIPEECENISSLVAFENLKANVTDIMLILLVENISGLSNDDFQVEIIRDFDVAVVTFQKHIDTIRFVDDCTKHHSIKQLQLSPRLLEVTNTIRVENLPPGADDYSLKLFFENPYNGGGRVANVEYFPEESSALIEFFDRKVLDTIMATKLDFNKMPLSVFPYYASLGTALYGKEKPLIKLPAPFEESLDLPLWKFLQKKNHLIEEINDEMRRCHCELTWSQLSGKVTIRPAATLVNEGRPRIKTWQADTSTTLSSIRSKYKVNPIKVDPTMWDTIKNDVKDDRILIEFDTLKEMVILAGKSEDVQSIEVQVRELIESTTQKIKREEQSLKEKMIISPGRYFLLCHSSLLDHLLTECPEIEICYDRVTQHLCLKGPSADVYKAKCEIQEKVYTMAQKNIQVSPEIFQFLQQVNWKEFSKCLFIAQKILALYELEGTTVLLTSCSSEALLEAEKQMLSALNYKRIEVENKEVLHGKKWKGLTHNLLKKQNSSPNTVIINELTSETTAEVIITGCVKEVNETYKLLFNFVEQNMKIERLVEVKPSLVIDYLKTEKKLFWPKIKKVNVQVSFNPENKQKGILLTGSKTEVLKAVDIVKQVWDSVCVKSVHTDKPGAKQFFQDKARFYQSEIKRLFGCYIELQENEVMKEGGSPAGQKCFSRTVLAPGVVLIVQQGDLARLPVDVVVNASNEDLKHYGGLAAALSKAAGPELQADCDQIVKREGRLLPGNATISKAGKLPYHHVIHAVGPRWSGYEAPRCVYLLRRAVQLSLCLAEKYKYRSIAIPAISSGVFGFPLGRCVETIVSAIKENFQFKKDGHCLKEIYLVDVSEKTVEAFAEAVKTVFKATLPDTAAPPGLPPAAAGPGKTSWEKGSLVSPGGLQMLLVKEGVQNAKTDVVVNSVPLDLVLSRGPLSKSLLEKAGPELQEELDTVGQGVAVSMGTVLKTSSWNLDCRYVLHVVAPEWRNGSTSSLKIMEDIIRECMEITESLSLKSIAFPAIGTGNLGFPKNIFAELIISEVFKFSSKNQLKTLQEVHFLLHPSDHENIQAFSDEFARRANGNLVSDKIPKAKDTQGFYGTVSSPDSGVYEMKIGSIIFQVASGDITKEEADVIVNSTSNSFNLKAGVSKAILECAGQNVERECSQQAQQRKNDYIITGGGFLRCKNIIHVIGGNDVKSSVSSVLQECEKKNYSSICLPAIGTGNAKQHPDKVAEAIIDAIEDFVQKGSAQSVKKVKVVIFLPQVLDVFYANMKKREGTQLSSQQSVMSKLASFLGFSKQSPQKKNHLVLEKKTESATFRVCGENVTCVEYAISWLQDLIEKEQCPYTSEDECIKDFDEKEYQELNELQKKLNINISLDHKRPLIKVLGISRDVMQARDEIEAMIKRVRLAKEQESRADCISEFIEWQYNDNNTSHCFNKMTNLKLEDARREKKKTVDVKINHRHYTVNLNTYTATDTKGHSLSVQRLTKSKVDIPAHWSDMKQQNFCVVELLPSDPEYNTVASKFNQTCSHFRIEKIERIQNPDLWNSYQAKKKTMDAKNGQTMNEKQLFHGTDAGSVPHVNRNGFNRSYAGKNAVAYGKGTYFAVNANYSANDTYSRPDANGRKHVYYVRVLTGIYTHGNHSLIVPPSKNPQNPTDLYDTVTDNVHHPSLFVAFYDYQAYPEYLITFRK.

The residue at position 33 (Ser-33) is a Phosphoserine. A disordered region spans residues 109–132 (SKTKEDVKEPDVSEELDTKLPLDG). Macro domains are found at residues 791–978 (KCFS…KTVF), 1003–1190 (WEKG…ARRA), and 1216–1387 (DSGV…KKRE). Residues Asn-824, Leu-833, 922–926 (SSGVF), Asp-961, 1023–1024 (VQ), Ser-1034, 1046–1049 (LSKS), 1133–1137 (GTGNL), 1175–1178 (DHEN), 1235–1236 (DI), Ser-1247, Val-1258, 1332–1336 (GTGNA), and Phe-1371 contribute to the a glycoprotein site. 2 positions are modified to phosphoserine: Ser-1403 and Ser-1411. The WWE domain occupies 1523 to 1601 (EQESRADCIS…SLSVQRLTKS (79 aa)). The PARP catalytic domain occupies 1605 to 1801 (IPAHWSDMKQ…YPEYLITFRK (197 aa)).

It belongs to the ARTD/PARP family. Interacts with STAT6. Interacts with PARP10. Interacts with PARP9 in IFNG-stimulated macrophages; the interaction prevents PARP14-mediated STAT1 and STAT6 ADP-riboslylation. In terms of processing, auto-ADP-ribosylated. As to expression, expressed in macrophages.

It localises to the nucleus. The protein localises to the cytoplasm. It carries out the reaction L-glutamyl-[protein] + NAD(+) = 5-O-(ADP-D-ribosyl)-L-glutamyl-[protein] + nicotinamide. ADP-ribosyltransferase that mediates mono-ADP-ribosylation of glutamate residues on target proteins. In contrast to PARP1 and PARP2, it is not able to mediate poly-ADP-ribosylation. Has been shown to catalyze the mono-ADP-ribosylation of STAT1 at 'Glu-657' and 'Glu-705', thus decreasing STAT1 phosphorylation which negatively regulates pro-inflammatory cytokine production in macrophages in response to IFNG stimulation. However, the role of ADP-ribosylation in the prevention of STAT1 phosphorylation has been called into question and it has been suggested that the inhibition of phosphorylation may be the result of sumoylation of STAT1 'Lys-703'. Mono-ADP-ribosylates STAT6; enhancing STAT6-dependent transcription. In macrophages, positively regulates MRC1 expression in response to IL4 stimulation by promoting STAT6 phosphorylation. Mono-ADP-ribosylates PARP9. The protein is Protein mono-ADP-ribosyltransferase PARP14 of Homo sapiens (Human).